We begin with the raw amino-acid sequence, 249 residues long: Probable transcriptional regulatory protein LIC_12886 (249 aa).

Belongs to the TACO1 family.

The protein localises to the cytoplasm. The polypeptide is Probable transcriptional regulatory protein LIC_12886 (Leptospira interrogans serogroup Icterohaemorrhagiae serovar copenhageni (strain Fiocruz L1-130)).